A 492-amino-acid polypeptide reads, in one-letter code: Cysteine--tRNA ligase (492 aa).

C35 contacts Zn(2+). The 'HIGH' region motif lies at 37 to 47 (PTVYSNVHLGN). Zn(2+) contacts are provided by C230, H255, and E259. Residues 287–291 (KMAKS) carry the 'KMSKS' region motif. K290 lines the ATP pocket.

This sequence belongs to the class-I aminoacyl-tRNA synthetase family. As to quaternary structure, monomer. Requires Zn(2+) as cofactor.

Its subcellular location is the cytoplasm. It catalyses the reaction tRNA(Cys) + L-cysteine + ATP = L-cysteinyl-tRNA(Cys) + AMP + diphosphate. The polypeptide is Cysteine--tRNA ligase (Flavobacterium johnsoniae (strain ATCC 17061 / DSM 2064 / JCM 8514 / BCRC 14874 / CCUG 350202 / NBRC 14942 / NCIMB 11054 / UW101) (Cytophaga johnsonae)).